Consider the following 640-residue polypeptide: RNA polymerase II elongation factor ELL2 (640 aa).

3 disordered regions span residues 172-202 (AVSD…STIS), 290-320 (KLNP…PQKR), and 343-490 (RVPP…EEDL). Composition is skewed to polar residues over residues 184–202 (TPMN…STIS) and 291–318 (LNPS…SSPQ). Residues 360–372 (AAGLPLPPAAAAI) are compositionally biased toward low complexity. Over residues 391 to 401 (IVNSNSNSPST) the composition is skewed to polar residues. The span at 457–470 (MSHKKSKKKSKKHK) shows a compositional bias: basic residues. The span at 471–490 (EKDQIKKHDIETIEEKEEDL) shows a compositional bias: basic and acidic residues. A phosphoserine mark is found at Ser503 and Ser580. The OCEL domain occupies 526–636 (PDYLIKYIAI…LIGEFDQQQA (111 aa)).

The protein belongs to the ELL/occludin family. In terms of assembly, component of the super elongation complex (SEC), at least composed of EAF1, EAF2, CDK9, MLLT3/AF9, AFF (AFF1 or AFF4), the P-TEFb complex and ELL (ELL, ELL2 or ELL3). Component of the little elongation complex (LEC), at least composed of ELL (ELL, ELL2 or ELL3), ZC3H8, ICE1 and ICE2. Interacts with AFF4; the interaction is direct and leads to stabilize ELL2 and prevent ELL2 ubiquitination. Interacts with EAF1 and EAF2. In terms of processing, ubiquitinated by SIAH1, leading to its degradation by the proteasome. Interaction with AFF4 stabilizes ELL2 and prevents ELL2 ubiquitination.

The protein localises to the nucleus. Elongation factor component of the super elongation complex (SEC), a complex required to increase the catalytic rate of RNA polymerase II transcription by suppressing transient pausing by the polymerase at multiple sites along the DNA. Component of the little elongation complex (LEC), a complex required to regulate small nuclear RNA (snRNA) gene transcription by RNA polymerase II and III. Plays a role in immunoglobulin secretion in plasma cells: directs efficient alternative mRNA processing, influencing both proximal poly(A) site choice and exon skipping, as well as immunoglobulin heavy chain (IgH) alternative processing. Probably acts by regulating histone modifications accompanying transition from membrane-specific to secretory IgH mRNA expression. This chain is RNA polymerase II elongation factor ELL2 (ELL2), found in Homo sapiens (Human).